We begin with the raw amino-acid sequence, 237 residues long: MSVHINAPEGAIAESVLLPGDPLRAKFIAENFLEDVVCYNEVRGMYGFTGTYKGKKISVQGTGMGIPSISIYANELIQSYGVKNLIRVGTCGGYSEKVKVRDLIIAMSASTDSNLNLVRFQGRTFAPTASFELLKPAYDIAVEKGFDPKVGSIYSSDVFYGDDDEDWKKWAKFGCLGVEMEAAALYTIAAKFGVNALALLTVSDHFVTGEVTSAEERQLTFTNMMEVALDTIAKIEN.

Position 4 (histidine 4) interacts with a purine D-ribonucleoside. Phosphate is bound by residues glycine 20, arginine 24, arginine 43, and 87 to 90; that span reads RVGT. A purine D-ribonucleoside is bound by residues 179–181 and 203–204; these read EME and SD. Catalysis depends on aspartate 204, which acts as the Proton donor.

This sequence belongs to the PNP/UDP phosphorylase family. As to quaternary structure, homohexamer; trimer of homodimers.

It carries out the reaction a purine D-ribonucleoside + phosphate = a purine nucleobase + alpha-D-ribose 1-phosphate. It catalyses the reaction a purine 2'-deoxy-D-ribonucleoside + phosphate = a purine nucleobase + 2-deoxy-alpha-D-ribose 1-phosphate. In terms of biological role, catalyzes the reversible phosphorolytic breakdown of the N-glycosidic bond in the beta-(deoxy)ribonucleoside molecules, with the formation of the corresponding free purine bases and pentose-1-phosphate. The protein is Purine nucleoside phosphorylase DeoD-type of Clostridium beijerinckii (strain ATCC 51743 / NCIMB 8052) (Clostridium acetobutylicum).